Here is a 470-residue protein sequence, read N- to C-terminus: Putative F-box/LRR-repeat protein At3g58920 (470 aa).

One can recognise an F-box domain in the interval 1–53; that stretch reads MDRISNLPNEIICHIVSFLSAKEAAFASVLSKRWQNLFTIVQKLEFDDSVKNQ. LRR repeat units lie at residues 114–142, 143–170, 173–198, 225–250, 287–312, and 342–367; these read KLEIYGEDGYLLPSEVFTCKTIVDLKLTS, CIFAESYVIDVIPENAFLPGLESLFLKS, FSDLRGCAFQTLLSACPVLKTLTIYD, FTYFNGSDFKSITFDTPSLTYLKYID, EDDPITSNPTNLIKGLRNVEILHLST, and YECFNWRLLPILLKKTPNLKTLMIKG.

This Arabidopsis thaliana (Mouse-ear cress) protein is Putative F-box/LRR-repeat protein At3g58920.